The sequence spans 355 residues: 3-dehydroquinate synthase (355 aa).

Residues 71 to 76 (EGEERK), 105 to 109 (GVVGD), 129 to 130 (TS), Lys142, and Lys151 contribute to the NAD(+) site. Residues Glu184, His246, and His263 each contribute to the Zn(2+) site.

Belongs to the sugar phosphate cyclases superfamily. Dehydroquinate synthase family. It depends on Co(2+) as a cofactor. Requires Zn(2+) as cofactor. NAD(+) is required as a cofactor.

It localises to the cytoplasm. It catalyses the reaction 7-phospho-2-dehydro-3-deoxy-D-arabino-heptonate = 3-dehydroquinate + phosphate. It functions in the pathway metabolic intermediate biosynthesis; chorismate biosynthesis; chorismate from D-erythrose 4-phosphate and phosphoenolpyruvate: step 2/7. Catalyzes the conversion of 3-deoxy-D-arabino-heptulosonate 7-phosphate (DAHP) to dehydroquinate (DHQ). In Streptococcus pneumoniae (strain Hungary19A-6), this protein is 3-dehydroquinate synthase.